A 738-amino-acid chain; its full sequence is MSYPPPVGDSIKLKVQASNDPEEAFTNRAYLPISSFSFLFPNVQSNLYTTNTNYIKIRVGANEYILSASPNKNMKPDSIALSKALRGWMYVSNNEEVYVEFYDPNPNICGSMKVSIDYLTKGKQGPKQDSQEIIGKIIDNFNSQYFTFGQLFYIKNSNSTFELRVEAVETNEVPTKDKGWAIISPATKIILQKMPGSLIDIETNGPLVVNQIFTSDWDFENMGIGGLDAEFRDIFRRAFSSRIFPPAIVKKLGVNHVKGMLLYGPPGTGKTLIARQIGKMLNGREPKVVSGPSILNKYVGQSEENIRMLFRDAEIEQKAKGDDSGLHIIIFDELDAICKSRGSRQGDSGVGDSVVNQLLAMIDGVESLNNILVIGMTNRKDMIDEALLRPGRLEVHVEISLPDEHGREQIFKIHTAKMRDQNALDKDVNLANYAHTTRNYSGAEIEGVVKSAASYAFSRQVDTKNIKNVEIKPEDIKVCDQDFKRAITEVTPSFGSTDNQFESYAENGIINYGPVFDKLLQSGNAFVEQVKKSNRTPMMSVLLSGRPGCGKSSLAATLAKSSEFPFTRIISPNDLLGYNESAKASKITKVFEDSYKSPMSCVVVDEIERLIEYVPIGPRFSNLILQTLAVLFKRTPPKGRKLLVIATTSNPDILKDMDIMDCFATVLSVPSISTAKEFQTVCFELGFTQKEASEAASFFTSPITIKQIIMIVEMARQEEGNFIDNFKMCLEDFNIRNF.

Residues 507-512 (NGIINY) and 547-554 (PGCGKSSL) contribute to the ATP site.

It belongs to the AAA ATPase family. In terms of assembly, interacts with syn7A, snpA and snpC. Mg(2+) is required as a cofactor.

The protein resides in the cytoplasmic vesicle membrane. The protein localises to the endosome membrane. It carries out the reaction ATP + H2O = ADP + phosphate + H(+). In terms of biological role, required for vesicle-mediated transport. Involved in endocytosis and endosome-endosome fusion. May be required for transport from the endoplasmic reticulum to the Golgi stack, and for the fusion of transport vesicles within the Golgi cisternae. Required for cell polarity, locomotion and chemotaxis. This is Vesicle-fusing ATPase (nsfA) from Dictyostelium discoideum (Social amoeba).